Reading from the N-terminus, the 848-residue chain is MPSYVTRQKTRQTFSWVGRPLPNRKQFYQMYKEICMKINGCSEIHIKVGQFVLIQGEDNQKPYVAKLIELFENGSEVPPKKYARVQWFVRFCEIPIPKRHLLGRRPSAQEIFWYDCSDCDNDIHVETIIGPVQVVALAPEDEIPVNQKSEETLFVKLSWNKKNFAPLPPEELAALRRLECQKPLEAKTKSVKSPSWSTAEQEVKRIESSHSTSRSYQDPAHTVTPNAMKSLECGGFTRKPNMRLSRKILCDSLDSQKTCKRRAAFSETTSPPKKPQPGEIKTSSALETLGKNGHTQPFFAKSSMVLRTRGTAVKTTKLTVESALSPVRSRSRYSVAPSVGLTPQYIGRKAKEQETHKEPIHTSLRARRRSSLLTLKRIKQQLWLLDDDKSDQEEEESISSVEVSDSSSEEEDESVPSPPTGKPVGQSRTRRTASKPSSQTPSKSPKKTFRPRPPLHATPQIRDRNLAVQEPASVLEEARLRLHVSAVPDSLPCREQEFQDIYSFVESKLLDGTGGCMYISGVPGTGKTATVHEVIRCLQQAAQTNDVPPFEYVEVNGMKLTEPHQVYVQILQKLTGQKATANHAAELLAKQFCSRGSQKETTVLLVDELDLLWTHKQDVLYNLFDWPTHKGARLVVLTIANTMDLPERIMMNRVASRLGLTRMSFQPYSHSQLKQILVSRLKHLKAFEDDAVQLVARKVAALSGDARRCLDICRRATEICEVSHQRGDSQCLVTVAHLMEAIDEMFSSSYITAIKNSSVLEQSFLRAIIAEFRRSGLEEATFQQIYSQHVALCRMEGLPYPTMSETMAVCSRLGSCRILLVEPSRNDLLLRVRLNVSQNDVLYALKEE.

The BAH domain occupies 44 to 170 (IHIKVGQFVL…KKNFAPLPPE (127 aa)). The disordered stretch occupies residues 189–227 (KSVKSPSWSTAEQEVKRIESSHSTSRSYQDPAHTVTPNA). Over residues 191-200 (VKSPSWSTAE) the composition is skewed to polar residues. Residues serine 193, serine 252, serine 270, and serine 284 each carry the phosphoserine modification. The disordered stretch occupies residues 261 to 280 (RRAAFSETTSPPKKPQPGEI). Lysine 314 carries the post-translational modification N6-acetyllysine. Serine 325 carries the phosphoserine modification. Disordered stretches follow at residues 344–365 (QYIGRKAKEQETHKEPIHTSLR) and 388–466 (DKSD…DRNL). The span at 349-360 (KAKEQETHKEPI) shows a compositional bias: basic and acidic residues. Residues 388-397 (DKSDQEEEES) show a composition bias toward acidic residues. Phosphoserine occurs at positions 404 and 407. A compositionally biased stretch (low complexity) spans 434–443 (SKPSSQTPSK). ATP contacts are provided by residues valine 487 and 521–529 (GVPGTGKTA). The segment at 488–848 (PDSLPCREQE…NDVLYALKEE (361 aa)) is necessary and sufficient for ORC complex assembly. 2 residues coordinate Mg(2+): aspartate 607 and glutamate 608. Residues glutamate 608, asparagine 641, and arginine 707 each coordinate ATP.

It belongs to the ORC1 family. Component of ORC, a complex composed of at least 6 subunits: ORC1, ORC2, ORC3, ORC4, ORC5 and ORC6. ORC is regulated in a cell-cycle dependent manner. It is sequentially assembled at the exit from anaphase of mitosis and disassembled as cells enter S phase. Interacts with CDC6 and KAT7/HBO1. Interacts with LRWD1 predominantly during the G1 phase and with less affinity during mitosis, when phosphorylated. In terms of processing, phosphorylated during mitosis.

The protein localises to the nucleus. In terms of biological role, component of the origin recognition complex (ORC) that binds origins of replication. DNA-binding is ATP-dependent. The specific DNA sequences that define origins of replication have not been identified yet. ORC is required to assemble the pre-replication complex necessary to initiate DNA replication. This is Origin recognition complex subunit 1 (Orc1) from Rattus norvegicus (Rat).